A 255-amino-acid polypeptide reads, in one-letter code: Acetyl-coenzyme A carboxylase carboxyl transferase subunit alpha (255 aa).

The region spanning 1–235 (MNIAKIVREA…KKELQTELAR (235 aa)) is the CoA carboxyltransferase C-terminal domain.

This sequence belongs to the AccA family. As to quaternary structure, acetyl-CoA carboxylase is a heterohexamer composed of biotin carboxyl carrier protein (AccB), biotin carboxylase (AccC) and two subunits each of ACCase subunit alpha (AccA) and ACCase subunit beta (AccD).

The protein localises to the cytoplasm. It catalyses the reaction N(6)-carboxybiotinyl-L-lysyl-[protein] + acetyl-CoA = N(6)-biotinyl-L-lysyl-[protein] + malonyl-CoA. It participates in lipid metabolism; malonyl-CoA biosynthesis; malonyl-CoA from acetyl-CoA: step 1/1. Its function is as follows. Component of the acetyl coenzyme A carboxylase (ACC) complex. First, biotin carboxylase catalyzes the carboxylation of biotin on its carrier protein (BCCP) and then the CO(2) group is transferred by the carboxyltransferase to acetyl-CoA to form malonyl-CoA. This chain is Acetyl-coenzyme A carboxylase carboxyl transferase subunit alpha, found in Streptococcus pneumoniae serotype 2 (strain D39 / NCTC 7466).